The sequence spans 326 residues: Homeobox protein Hox-A1 (326 aa).

Positions Thr-196 to Lys-201 match the Antp-type hexapeptide motif. A DNA-binding region (homeobox) is located at residues Pro-221 to Glu-280. Residues Arg-273–Gly-326 are disordered. The span at Thr-285–Ala-296 shows a compositional bias: polar residues. The span at Asn-306–Gly-326 shows a compositional bias: low complexity.

It belongs to the Antp homeobox family. Labial subfamily.

It localises to the nucleus. Sequence-specific transcription factor. Part of a developmental regulatory system that provides cells with specific positional identities on the anterior-posterior axis. Acts on the anterior body structures. Seems to act in the maintenance and/or generation of hindbrain segments. The chain is Homeobox protein Hox-A1 (HOXA1) from Heterodontus francisci (Horn shark).